The following is a 228-amino-acid chain: LOB domain-containing protein 30 (228 aa).

One can recognise an LOB domain in the interval 16 to 118; it reads GPCGACKFLR…TELSYLQAHL (103 aa). The tract at residues 188 to 228 is disordered; it reads SNMGGGGELQALAREFIHGGQMPAQPSPGTSGSASSVIKRE. A compositionally biased stretch (polar residues) spans 214 to 228; sequence SPGTSGSASSVIKRE.

This sequence belongs to the LOB domain-containing protein family. Expressed in roots, stems, leaves and flowers. Expressed in vascular tissues of hypocotyls, leaves, roots, developing floral organs and siliques.

In terms of biological role, involved in the positive regulation of tracheary element (TE) differentiation. Involved in a positive feedback loop that maintains or promotes NAC030/VND7 expression that regulates TE differentiation-related genes. The polypeptide is LOB domain-containing protein 30 (LBD30) (Arabidopsis thaliana (Mouse-ear cress)).